The chain runs to 349 residues: Putative methylesterase 12, chloroplastic (349 aa).

A chloroplast-targeting transit peptide spans 1–77 (MGNRVICMKK…GSTSSRRGTL (77 aa)). The tract at residues 61–80 (GSMSRRIGSTSSRRGTLSDS) is disordered. Ser-173 serves as the catalytic Acyl-ester intermediate. Catalysis depends on charge relay system residues Asp-300 and His-328.

It belongs to the AB hydrolase superfamily. Methylesterase family.

It localises to the plastid. It is found in the chloroplast. Putative methylesterase. The chain is Putative methylesterase 12, chloroplastic from Arabidopsis thaliana (Mouse-ear cress).